The primary structure comprises 596 residues: MTIMTMIMKMAPSKSALIRFNLVLLGFSFLLYTAIFFHPSSSVYFSSGASFVGCSFRDCTPKVVRGVKMQELVEENEINKKDLLTASNQTKLEAPSFMEEILTRGLGKTKIGMVNMEECDLTNWKRYGETVHIHFERVSKLFKWQDLFPEWIDEEEETEVPTCPEIPMPDFESLEKLDLVVVKLPCNYPEEGWRREVLRLQVNLVAANLAAKKGKTDWRWKSKVLFWSKCQPMIEIFRCDDLEKREADWWLYRPEVVRLQQRLSLPVGSCNLALPLWAPQGVDKVYDLTKIEAETKRPKREAYVTVLHSSESYVCGAITLAQSLLQTNTKRDLILLHDDSISITKLRALAAAGWKLRRIIRIRNPLAEKDSYNEYNYSKFRLWQLTDYDKVIFIDADIIVLRNLDLLFHFPQMSATGNDVWIYNSGIMVIEPSNCTFTTIMSQRSEIVSYNGGDQGYLNEIFVWWHRLPRRVNFLKNFWSNTTKERNIKNNLFAAEPPQVYAVHYLGWKPWLCYRDYDCNYDVDEQLVYASDAAHVRWWKVHDSMDDALQKFCRLTKKRRTEINWERRKARLRGSTDYHWKINVTDPRRRRSYLIG.

Residues 17–37 form a helical; Signal-anchor for type II membrane protein membrane-spanning segment; sequence LIRFNLVLLGFSFLLYTAIFF. Asp-395 and Asp-397 together coordinate Mn(2+). Substrate contacts are provided by residues 395–397, 424–426, 451–455, and 504–509; these read DAD, NSG, NGGDQ, and HYLGWK. His-504 is a Mn(2+) binding site.

The protein belongs to the glycosyltransferase 8 family. Glycogenin subfamily. The cofactor is Mn(2+).

The protein localises to the golgi apparatus membrane. Glycosyltransferase required for the addition of both glucuronic acid and 4-O-methylglucuronic acid branches to xylan in stem cell walls. In association with GUX1, is responsible for almost all of the substitutions of the xylan backbone in stem glucuronoxylan. The sequence is that of UDP-glucuronate:xylan alpha-glucuronosyltransferase 2 (GUX2) from Arabidopsis thaliana (Mouse-ear cress).